The chain runs to 342 residues: Methylthioribose-1-phosphate isomerase (342 aa).

Substrate-binding positions include 44–46 (RGA), arginine 87, and glutamine 194. Residue aspartate 235 is the Proton donor of the active site. A substrate-binding site is contributed by 245 to 246 (NK).

It belongs to the eIF-2B alpha/beta/delta subunits family. MtnA subfamily.

It catalyses the reaction 5-(methylsulfanyl)-alpha-D-ribose 1-phosphate = 5-(methylsulfanyl)-D-ribulose 1-phosphate. It functions in the pathway amino-acid biosynthesis; L-methionine biosynthesis via salvage pathway; L-methionine from S-methyl-5-thio-alpha-D-ribose 1-phosphate: step 1/6. Catalyzes the interconversion of methylthioribose-1-phosphate (MTR-1-P) into methylthioribulose-1-phosphate (MTRu-1-P). The sequence is that of Methylthioribose-1-phosphate isomerase from Acetivibrio thermocellus (strain ATCC 27405 / DSM 1237 / JCM 9322 / NBRC 103400 / NCIMB 10682 / NRRL B-4536 / VPI 7372) (Clostridium thermocellum).